Consider the following 367-residue polypeptide: Cytochrome P450 119 (367 aa).

The heme site is built by histidine 76, arginine 80, threonine 257, arginine 259, histidine 315, and cysteine 317.

Belongs to the cytochrome P450 family. The cofactor is heme.

The protein resides in the cytoplasm. The sequence is that of Cytochrome P450 119 (cyp119) from Sulfurisphaera tokodaii (strain DSM 16993 / JCM 10545 / NBRC 100140 / 7) (Sulfolobus tokodaii).